Consider the following 382-residue polypeptide: Mannitol-1-phosphate 5-dehydrogenase (382 aa).

NAD(+) is bound at residue 4 to 15 (AVHFGAGNIGRG).

Belongs to the mannitol dehydrogenase family.

It carries out the reaction D-mannitol 1-phosphate + NAD(+) = beta-D-fructose 6-phosphate + NADH + H(+). The sequence is that of Mannitol-1-phosphate 5-dehydrogenase from Vibrio parahaemolyticus serotype O3:K6 (strain RIMD 2210633).